Consider the following 423-residue polypeptide: Putative competence-damage inducible protein (423 aa).

The protein belongs to the CinA family.

The polypeptide is Putative competence-damage inducible protein (Streptococcus equi subsp. zooepidemicus (strain H70)).